The primary structure comprises 69 residues: DNA gyrase inhibitor YacG (69 aa).

The interval Met-1–Ser-28 is disordered. 4 residues coordinate Zn(2+): Cys-21, Cys-24, Cys-36, and Cys-40.

This sequence belongs to the DNA gyrase inhibitor YacG family. As to quaternary structure, interacts with GyrB. It depends on Zn(2+) as a cofactor.

Inhibits all the catalytic activities of DNA gyrase by preventing its interaction with DNA. Acts by binding directly to the C-terminal domain of GyrB, which probably disrupts DNA binding by the gyrase. This chain is DNA gyrase inhibitor YacG, found in Sinorhizobium fredii (strain NBRC 101917 / NGR234).